The sequence spans 147 residues: Large ribosomal subunit protein uL15 (147 aa).

Residues 1-20 (MTLRLNDLKPADGARTERTR) are compositionally biased toward basic and acidic residues. Positions 1-61 (MTLRLNDLKP…GFEGGQTPMQ (61 aa)) are disordered. Residues 23-33 (RGIGSGLGKTA) are compositionally biased toward gly residues. The segment covering 34 to 47 (GRGHKGSFARKGGG) has biased composition (basic residues).

This sequence belongs to the universal ribosomal protein uL15 family. As to quaternary structure, part of the 50S ribosomal subunit.

Binds to the 23S rRNA. This is Large ribosomal subunit protein uL15 from Xanthomonas euvesicatoria pv. vesicatoria (strain 85-10) (Xanthomonas campestris pv. vesicatoria).